Reading from the N-terminus, the 367-residue chain is 2-aminoethylphosphonate--pyruvate transaminase (367 aa).

An N6-(pyridoxal phosphate)lysine modification is found at K194.

Belongs to the class-V pyridoxal-phosphate-dependent aminotransferase family. PhnW subfamily. In terms of assembly, homodimer. Pyridoxal 5'-phosphate is required as a cofactor.

The catalysed reaction is (2-aminoethyl)phosphonate + pyruvate = phosphonoacetaldehyde + L-alanine. In terms of biological role, involved in phosphonate degradation. The protein is 2-aminoethylphosphonate--pyruvate transaminase of Salmonella heidelberg (strain SL476).